Consider the following 847-residue polypeptide: MASDIDQKDVDYAAKNLKLTTSLVANKPKDCPPEAPWGACYRVEINLENTGSKSLNENVEIYFSSIHRTLGSKSEEFKVEHINGDLHKITTTEKFKGLKGGKTKSFQVDFMNWIVSNSDFMPNYYVASEHLEGRNILNTVPIDAVHITEEVSGFTTGIKHTPNQLKRTANDLLPAATATTRYEQYSKVKDLGADAVSAHILPTPLETSVHEGSLNIAQGINIVSDALPADQVEALNFRFETLGVNTGTGVPVNVTIKADSSKKSGSYTLDVTSSGIRIVGVDKAGAFYGVQSLAGLVTVGKDTINQVSINDEPRLDYRGMHMDVSRNFHSKELVFRFLDQMAAYKMNKFHFHLADDEGWRLEINGLPELTQVGAHRCHDVEQNKCMMPQLGSGAELPNNGSGYYTREDYKEILAYASARNIQVIPSMDMPGHSLAAVKSMEARYRKFMAEGDVVKAEMYLLSDPNDTTQYYSIQHYQDNTINPCMESSFVFMDKVIDEINKLHKEGGQPLTDYHIGADETAGAWGDSPECRKMFVAPESGVKNAKDINGYFINRISHILDAKGLTLGAWNDGLSHKALDASSLAGNPPKAWVWGTMFWGGVDQYNSFANKGYDVVVTPPDAYYFDMPYENDPEERGYYWATRFNDTKKVFSFMPENVPANVEWMTDRMGAKISATTGEKTHDFLGVQGALWSETIRTDAQVEYMVLPRMIAVAERGWHKASWEEEHKEGITYTSNVDGHEGTTHLNDNIATRDADWAHFSNILGYKEMPKLDKAGITYRLPVLGAVIKNNILDVVTEFHGVAIQYSLDGKTWHKYDDTKKPQVSTKALVRSVSTNGRTGRAVEVLAK.

3 cysteine pairs are disulfide-bonded: cysteine 31/cysteine 40, cysteine 377/cysteine 385, and cysteine 484/cysteine 530. The Proton donor role is filled by glutamate 519.

Belongs to the glycosyl hydrolase 20 family.

The catalysed reaction is Hydrolysis of terminal non-reducing N-acetyl-D-hexosamine residues in N-acetyl-beta-D-hexosaminides.. It participates in glycan degradation; chitin degradation. Hydrolysis of terminal, non-reducing N-acetyl-beta-D-glucosamine residues in chitobiose and higher analogs, and in glycoproteins. In Vibrio vulnificus, this protein is Beta-hexosaminidase (hex).